The sequence spans 205 residues: LexA repressor (205 aa).

A DNA-binding region (H-T-H motif) is located at residues 28-48 (RAELMRAFDFRSPNAAESHLR). Active-site for autocatalytic cleavage activity residues include Ser-120 and Lys-159.

It belongs to the peptidase S24 family. As to quaternary structure, homodimer.

It carries out the reaction Hydrolysis of Ala-|-Gly bond in repressor LexA.. Functionally, represses a number of genes involved in the response to DNA damage (SOS response), including recA and lexA. In the presence of single-stranded DNA, RecA interacts with LexA causing an autocatalytic cleavage which disrupts the DNA-binding part of LexA, leading to derepression of the SOS regulon and eventually DNA repair. This Acidithiobacillus ferrooxidans (strain ATCC 23270 / DSM 14882 / CIP 104768 / NCIMB 8455) (Ferrobacillus ferrooxidans (strain ATCC 23270)) protein is LexA repressor.